Here is a 638-residue protein sequence, read N- to C-terminus: Phosphomethylpyrimidine synthase (638 aa).

Substrate is bound by residues Asn-236, Met-265, Tyr-294, His-330, 350-352 (SRG), 391-394 (DGLR), and Glu-430. His-434 is a Zn(2+) binding site. Tyr-457 is a substrate binding site. His-498 provides a ligand contact to Zn(2+). [4Fe-4S] cluster-binding residues include Cys-578, Cys-581, and Cys-586. Residues 608–624 (AEGASQQEAEQGMQEMS) are compositionally biased toward low complexity. A disordered region spans residues 608–633 (AEGASQQEAEQGMQEMSQKYKDAGRR).

Belongs to the ThiC family. As to quaternary structure, homodimer. [4Fe-4S] cluster is required as a cofactor.

It catalyses the reaction 5-amino-1-(5-phospho-beta-D-ribosyl)imidazole + S-adenosyl-L-methionine = 4-amino-2-methyl-5-(phosphooxymethyl)pyrimidine + CO + 5'-deoxyadenosine + formate + L-methionine + 3 H(+). It functions in the pathway cofactor biosynthesis; thiamine diphosphate biosynthesis. In terms of biological role, catalyzes the synthesis of the hydroxymethylpyrimidine phosphate (HMP-P) moiety of thiamine from aminoimidazole ribotide (AIR) in a radical S-adenosyl-L-methionine (SAM)-dependent reaction. The chain is Phosphomethylpyrimidine synthase from Hahella chejuensis (strain KCTC 2396).